The chain runs to 1068 residues: Ubiquitin-protein ligase E3B (1068 aa).

M1 carries the post-translational modification N-acetylmethionine. Residues 29–58 (RERAAVVIQAHVRSFLCRSRLQRDIRREID) enclose the IQ domain. S419 carries the post-translational modification Phosphoserine. One can recognise an HECT domain in the interval 702 to 1068 (SQHAMKGVIR…ISMNTGFELS (367 aa)). Catalysis depends on C1036, which acts as the Glycyl thioester intermediate.

As to expression, widely expressed.

The protein localises to the postsynaptic density. It catalyses the reaction S-ubiquitinyl-[E2 ubiquitin-conjugating enzyme]-L-cysteine + [acceptor protein]-L-lysine = [E2 ubiquitin-conjugating enzyme]-L-cysteine + N(6)-ubiquitinyl-[acceptor protein]-L-lysine.. It functions in the pathway protein modification; protein ubiquitination. Its function is as follows. E3 ubiquitin-protein ligase which accepts ubiquitin from an E2 ubiquitin-conjugating enzyme in the form of a thioester and then directly transfers the ubiquitin to targeted substrates. Ubiquitinates BCKDK and targets it for degradation, thereby regulating various metabolic processes. Involved in the positive regulation of neurite branching in hippocampal neurons and the control of neuronal spine number and morphology, through the ubiquitination of PPP3CC. This chain is Ubiquitin-protein ligase E3B (UBE3B), found in Homo sapiens (Human).